The primary structure comprises 529 residues: Bifunctional purine biosynthesis protein PurH (529 aa).

An MGS-like domain is found at 1 to 148 (MNNVRPIRRA…KNHKDTTIVV (148 aa)).

Belongs to the PurH family.

The enzyme catalyses (6R)-10-formyltetrahydrofolate + 5-amino-1-(5-phospho-beta-D-ribosyl)imidazole-4-carboxamide = 5-formamido-1-(5-phospho-D-ribosyl)imidazole-4-carboxamide + (6S)-5,6,7,8-tetrahydrofolate. It catalyses the reaction IMP + H2O = 5-formamido-1-(5-phospho-D-ribosyl)imidazole-4-carboxamide. The protein operates within purine metabolism; IMP biosynthesis via de novo pathway; 5-formamido-1-(5-phospho-D-ribosyl)imidazole-4-carboxamide from 5-amino-1-(5-phospho-D-ribosyl)imidazole-4-carboxamide (10-formyl THF route): step 1/1. It functions in the pathway purine metabolism; IMP biosynthesis via de novo pathway; IMP from 5-formamido-1-(5-phospho-D-ribosyl)imidazole-4-carboxamide: step 1/1. The polypeptide is Bifunctional purine biosynthesis protein PurH (Shewanella frigidimarina (strain NCIMB 400)).